The chain runs to 183 residues: Protein jagunal homolog 1 (183 aa).

Over 1–39 the chain is Cytoplasmic; the sequence is MASRAGPRAAGTDGSDFQHRERVAMHYQMSVTLKYEIKK. Ser-3 carries the phosphoserine modification. The helical transmembrane segment at 40-60 threads the bilayer; the sequence is LIYVHLVIWLLLVAKMSVGHL. The Lumenal portion of the chain corresponds to 61 to 71; it reads RLLSHDQVAMP. Residues 72-92 form a helical membrane-spanning segment; that stretch reads YQWEYPYLLSVVPSLLGLLSF. Residues 93–96 are Cytoplasmic-facing; the sequence is PRNN. The chain crosses the membrane as a helical span at residues 97-117; that stretch reads ISYLVLSMISMGLFSIAPLIY. Residues 118–137 are Lumenal-facing; that stretch reads GSMEMFPAAQQLYRHGKAYR. Residues 138 to 158 form a helical membrane-spanning segment; sequence FLFGFSAVSVMYLVLVLAVQV. Topologically, residues 159–183 are cytoplasmic; sequence HAWQLYYSKKLLDSWFTSTQEKKRK.

It belongs to the jagunal family. As to quaternary structure, interacts with COPA, COPB2 and COPG2.

The protein localises to the endoplasmic reticulum membrane. Endoplasmic reticulum transmembrane protein involved in vesicle-mediated transport, which is required for neutrophil function. Required for vesicle-mediated transport; it is however unclear whether it is involved in early secretory pathway or intracellular protein transport. Acts as a regulator of neutrophil function, probably via its role in vesicle-mediated transport: required for defense against fungal pathogens and for granulocyte colony-stimulating factor (GM-CSF) signaling pathway; possibly by regulating glycosylation and/or targeting of proteins contributing to the viability and migration of neutrophils. This Bos taurus (Bovine) protein is Protein jagunal homolog 1 (JAGN1).